A 197-amino-acid chain; its full sequence is Nucleoid occlusion factor SlmA (197 aa).

The region spanning 7 to 67 (INRREHILQC…GLIDFIEESL (61 aa)) is the HTH tetR-type domain. The segment at residues 30 to 49 (TTAKLAAEVGVSEAALYRHF) is a DNA-binding region (H-T-H motif).

It belongs to the nucleoid occlusion factor SlmA family. Homodimer. Interacts with FtsZ.

The protein resides in the cytoplasm. Its subcellular location is the nucleoid. Its function is as follows. Required for nucleoid occlusion (NO) phenomenon, which prevents Z-ring formation and cell division over the nucleoid. Acts as a DNA-associated cell division inhibitor that binds simultaneously chromosomal DNA and FtsZ, and disrupts the assembly of FtsZ polymers. SlmA-DNA-binding sequences (SBS) are dispersed on non-Ter regions of the chromosome, preventing FtsZ polymerization at these regions. The protein is Nucleoid occlusion factor SlmA of Shewanella loihica (strain ATCC BAA-1088 / PV-4).